The following is a 1037-amino-acid chain: Cysteine-rich motor neuron 1 protein (1037 aa).

The signal sequence occupies residues 1–34; it reads MYLVAGGRGLAGCGHLSVSLLGLLLLLARSGTRA. Residues 35-112 enclose the IGFBP N-terminal domain; it reads LVCLPCDESK…EYEVGVCEDE (78 aa). Residues 35–940 lie on the Extracellular side of the membrane; the sequence is LVCLPCDESK…HPGEDSSLDS (906 aa). 6 cysteine pairs are disulfide-bonded: C37–C60, C40–C62, C45–C63, C51–C66, C74–C90, and C84–C109. Positions 314-316 match the Cell attachment site motif; it reads RGD. N-linked (GlcNAc...) asparagine glycosylation is present at N330. VWFC domains lie at 334–391 and 401–457; these read PACV…PVCE and AGCY…PVCE. Antistasin-like domains follow at residues 469 to 498, 505 to 532, 539 to 564, and 567 to 592; these read CGELSNCSLKEKDCVYGFKLDHNGCRTCQC, CLGLKRACTLDCPFGFLTDVHNCELCQC, CRPTMCDKFCPLGFLKNKHGCDICRC, and CPELPCSKICPLGFQQDSHGCLICKC. 4 consecutive VWFC domains span residues 606-663, 677-735, 751-809, and 817-874; these read GTCL…PSCT, SICH…PQCT, SYCR…PYCL, and VVCH…PMCP. A helical transmembrane segment spans residues 941–961; that stretch reads IVSVVVPIIICLSIIIAFLLI. Residues 962–1037 are Cytoplasmic-facing; it reads NQKKQWVPLL…LQADNFYQTV (76 aa). Position 1036 is a phosphothreonine (T1036).

As to quaternary structure, interacts with BMP4 and BMP7. As to expression, expressed during embryonic development in brain, kidney, spinal cord, testis, lens, vibrissae, pinna, tooth primordia and in specific regions of the CNS. Expressed in adult lens. Displays male-specific expression in the fetal gonads with the strongest expression in the Sertoli cells of developing testis.

It localises to the membrane. Functionally, may play a role in CNS development by interacting with growth factors implicated in motor neuron differentiation and survival. May play a role in capillary formation and maintenance during angiogenesis. Modulates BMP activity by affecting its processing and delivery to the cell surface. This chain is Cysteine-rich motor neuron 1 protein (Crim1), found in Mus musculus (Mouse).